We begin with the raw amino-acid sequence, 463 residues long: MFKVARASQYLAITGGGIEDIKLSKKSWVFPWQRCTVFDVSPVNYTFKVQAMSAEKLPFVLPAVFTIGPRVDDTEALILYARLISPHDKQSNHVNELVEGVIEGETRVLAASMTMEEIFKGTKEFKKEVFDKVQLELDQFGLVIYNANVKQLVDVPGHEYFSYLGQKTQMEAANQARIDVAEAKMKGEIGAKERTGLTLQNAAKIDAESKIISMQRQGEGTKAEIKVKTEVKVFENQKEADVAKANSELAMKKAAWTKDAKVAEVEATKAVALREAELQTQVEKMNALTRTEKLKAEFLSKASVEYETKVQEANWELYNKQKQAEAVLYEKQKQAEAQKAEADATFYSKQKEAEGLVALASAQGTYLRTLLDAVQNDYSCLRDFLMINNGTYQEIAKTNALAVRDLQPKISVWNHGGEQGIGGASGSGMKDIAGLYKMLPPVLDTVYEQTGMQPPAWIGTLSK.

The S-palmitoyl cysteine moiety is linked to residue Cys-35. Positions Glu-305–Glu-354 form a coiled coil.

The protein belongs to the band 7/mec-2 family. Flotillin subfamily. In terms of processing, may be palmitoylated.

It is found in the cell membrane. It localises to the membrane. The protein localises to the caveola. In terms of biological role, may act as a scaffolding protein within caveolar membranes, functionally participating in formation of caveolae or caveolae-like vesicles. The polypeptide is Flotillin-like protein 2 (FLOT2) (Arabidopsis thaliana (Mouse-ear cress)).